Reading from the N-terminus, the 324-residue chain is Acetyl-coenzyme A carboxylase carboxyl transferase subunit alpha (324 aa).

The CoA carboxyltransferase C-terminal domain occupies 37–291 (KLEKRLDKLK…REFIIQEWLR (255 aa)).

It belongs to the AccA family. Acetyl-CoA carboxylase is a heterohexamer composed of biotin carboxyl carrier protein (AccB), biotin carboxylase (AccC) and two subunits each of ACCase subunit alpha (AccA) and ACCase subunit beta (AccD).

The protein localises to the cytoplasm. The catalysed reaction is N(6)-carboxybiotinyl-L-lysyl-[protein] + acetyl-CoA = N(6)-biotinyl-L-lysyl-[protein] + malonyl-CoA. It functions in the pathway lipid metabolism; malonyl-CoA biosynthesis; malonyl-CoA from acetyl-CoA: step 1/1. Functionally, component of the acetyl coenzyme A carboxylase (ACC) complex. First, biotin carboxylase catalyzes the carboxylation of biotin on its carrier protein (BCCP) and then the CO(2) group is transferred by the carboxyltransferase to acetyl-CoA to form malonyl-CoA. The polypeptide is Acetyl-coenzyme A carboxylase carboxyl transferase subunit alpha (Chlamydia pneumoniae (Chlamydophila pneumoniae)).